Consider the following 227-residue polypeptide: Pectinesterase inhibitor 28 (227 aa).

Positions 1–25 (MASSMAPAAAMAILLLALLMPATLC) are cleaved as a signal peptide. Residues 28–50 (SGPPSSKHGHGGHAKRAPPPASP) form a disordered region. Residues 34–43 (KHGHGGHAKR) show a composition bias toward basic residues. Residues C66 and C75 are joined by a disulfide bond. Residues N67, N104, and N117 are each glycosylated (N-linked (GlcNAc...) asparagine). The cysteines at positions 139 and 179 are disulfide-linked.

The protein belongs to the PMEI family. Expressed in roots, leaves, culms and flag leaves.

The protein localises to the secreted. It is found in the extracellular space. Its subcellular location is the apoplast. Its function is as follows. Pectin methylesterase (PME) inhibitor that inhibits PME in vitro. Functions as a critical structural modulator by regulating the degree of pectin methylesterification and the physiochemical properties of the cell wall components. The chain is Pectinesterase inhibitor 28 from Oryza sativa subsp. japonica (Rice).